The following is a 272-amino-acid chain: Petrobactin import ATP-binding protein FpuC (272 aa).

The 237-residue stretch at Ile2 to Glu238 folds into the ABC transporter domain. An ATP-binding site is contributed by Gly34 to Ser41.

It belongs to the ABC transporter superfamily. As to quaternary structure, the complex is composed of two ATP-binding proteins (FpuC), two transmembrane proteins (FpuB) and a solute-binding protein (FpuA).

The protein resides in the cell membrane. It carries out the reaction a Fe(III)-siderophore(out) + ATP + H2O = a Fe(III)-siderophore(in) + ADP + phosphate + H(+). Part of an ABC transporter complex involved in ferric-petrobactin uptake. Probably responsible for energy coupling to the transport system. The sequence is that of Petrobactin import ATP-binding protein FpuC from Bacillus anthracis.